The sequence spans 417 residues: S-adenosylmethionine synthase (417 aa).

His-16 contributes to the ATP binding site. Asp-18 serves as a coordination point for Mg(2+). Glu-44 provides a ligand contact to K(+). L-methionine-binding residues include Glu-57 and Gln-100. The flexible loop stretch occupies residues 100-110; that stretch reads QSPDIAQGVDT. Residues 175–177, 251–252, Asp-260, 266–267, Ala-283, and Lys-287 each bind ATP; these read DGK, KF, and RK. Position 260 (Asp-260) interacts with L-methionine. Residue Lys-291 participates in L-methionine binding.

Belongs to the AdoMet synthase family. As to quaternary structure, homotetramer; dimer of dimers. It depends on Mg(2+) as a cofactor. K(+) is required as a cofactor.

Its subcellular location is the cytoplasm. The catalysed reaction is L-methionine + ATP + H2O = S-adenosyl-L-methionine + phosphate + diphosphate. It participates in amino-acid biosynthesis; S-adenosyl-L-methionine biosynthesis; S-adenosyl-L-methionine from L-methionine: step 1/1. Catalyzes the formation of S-adenosylmethionine (AdoMet) from methionine and ATP. The overall synthetic reaction is composed of two sequential steps, AdoMet formation and the subsequent tripolyphosphate hydrolysis which occurs prior to release of AdoMet from the enzyme. In Synechococcus elongatus (strain ATCC 33912 / PCC 7942 / FACHB-805) (Anacystis nidulans R2), this protein is S-adenosylmethionine synthase.